We begin with the raw amino-acid sequence, 609 residues long: ATP-dependent lipid A-core flippase (609 aa).

The next 6 membrane-spanning stretches (helical) occupy residues 47 to 67 (LLAA…IYLI), 88 to 108 (ILML…VGSF), 167 to 187 (AIIT…VMFV), 190 to 210 (WQLS…ISII), 279 to 299 (VIQI…AIFG), and 305 to 325 (GSSW…AAIL). The region spanning 47 to 340 (LLAAIGSIFF…LTKVNVVIQK (294 aa)) is the ABC transmembrane type-1 domain. An ABC transporter domain is found at 372–606 (VTIKDLSFAF…GGLYTRLYQS (235 aa)). 404–411 (GKSGSGKT) provides a ligand contact to ATP.

The protein belongs to the ABC transporter superfamily. Lipid exporter (TC 3.A.1.106) family. In terms of assembly, homodimer.

It localises to the cell inner membrane. The enzyme catalyses ATP + H2O + lipid A-core oligosaccharideSide 1 = ADP + phosphate + lipid A-core oligosaccharideSide 2.. In terms of biological role, involved in lipopolysaccharide (LPS) biosynthesis. Translocates lipid A-core from the inner to the outer leaflet of the inner membrane. Transmembrane domains (TMD) form a pore in the inner membrane and the ATP-binding domain (NBD) is responsible for energy generation. The protein is ATP-dependent lipid A-core flippase of Francisella tularensis subsp. holarctica (strain LVS).